A 347-amino-acid polypeptide reads, in one-letter code: DRICTGITSSNSPHVVKTATQGEVNVTGVIPLTTTPTKSHFANLKGTKTRGKLCPKCLNCTDLDVALGRPKCTGTIPSAKASILHEVKPVTSGCFPIMHDRTKXRQLPNLLRGYEHIRLSTHNVINAEKAPGGPYKIGTSGSCPNVTNGNGFFATMAWAVPKNDNNKTATNSLTVEVPYICTEGEDQITVWGFHSDNETQMVKLYGDSKPQKFTSSANGVTTHYVSQIGGFPNQAEDGGLPQSGRIVVDYMVQKSGKTGTITYQRGILLPQKVWCASGRSKVIKGSLPLIGEADCLHEKYGGLNKSKPYYTGEHAKAIGNCPIWVKTPLKLANGTKYRPPAKLLKER.

N-linked (GlcNAc...) asparagine; by host glycans are attached at residues asparagine 25, asparagine 59, asparagine 145, asparagine 166, asparagine 304, and asparagine 333.

Belongs to the influenza viruses hemagglutinin family. As to quaternary structure, homotrimer of disulfide-linked HA1-HA2. Post-translationally, in natural infection, inactive HA is matured into HA1 and HA2 outside the cell by one or more trypsin-like, arginine-specific endoprotease secreted by the bronchial epithelial cells. One identified protease that may be involved in this process is secreted in lungs by club cells. Palmitoylated.

The protein resides in the virion membrane. Its subcellular location is the host apical cell membrane. In terms of biological role, binds to sialic acid-containing receptors on the cell surface, bringing about the attachment of the virus particle to the cell. Plays a major role in the determination of host range restriction and virulence. Class I viral fusion protein. Responsible for penetration of the virus into the cell cytoplasm by mediating the fusion of the membrane of the endocytosed virus particle with the endosomal membrane. Low pH in endosomes induce an irreversible conformational change in HA2, releasing the fusion hydrophobic peptide. Several trimers are required to form a competent fusion pore. The sequence is that of Hemagglutinin (HA) from Influenza B virus (strain B/Finland/150/1990).